Here is a 205-residue protein sequence, read N- to C-terminus: MSKRESSKYKIDRRMGENIWGRPKSPVNRREYGPGQHGQRRKSKLSDFGVQLRAKQKLKGYYGDIREKQFRAIFAEASRRKGDTPENLVGLLESRLDAIVYRAKFVPTVFAARQFVNHGHVKVNGVRVNIGSYRCKPGDVIEVKEKSKQLVTVLEAVQLAERDVPDYIEADHNKMVATFVRVPALSDVPYPVVMEPHLVVEFYSR.

Over residues Met1–Gly16 the composition is skewed to basic and acidic residues. Residues Met1 to Ser46 form a disordered region. The region spanning Ser94–Val157 is the S4 RNA-binding domain.

This sequence belongs to the universal ribosomal protein uS4 family. As to quaternary structure, part of the 30S ribosomal subunit. Contacts protein S5. The interaction surface between S4 and S5 is involved in control of translational fidelity.

Its function is as follows. One of the primary rRNA binding proteins, it binds directly to 16S rRNA where it nucleates assembly of the body of the 30S subunit. Functionally, with S5 and S12 plays an important role in translational accuracy. The chain is Small ribosomal subunit protein uS4 from Rhizobium meliloti (strain 1021) (Ensifer meliloti).